The primary structure comprises 459 residues: Chromosomal replication initiator protein DnaA (459 aa).

The interval 1–83 (MKNAREIWRN…NKLEIHFIEE (83 aa)) is domain I, interacts with DnaA modulators. The domain II stretch occupies residues 83 to 121 (ESQAHKYAPADGSSNESIAVTETKEQPVLLPSKEEGDLG). Residues 122 to 338 (QLNDKYIFET…GALTRVVAYA (217 aa)) are domain III, AAA+ region. 4 residues coordinate ATP: G166, G168, K169, and T170. A domain IV, binds dsDNA region spans residues 339–459 (KLVGRPIDPD…IQTLKKALSN (121 aa)).

The protein belongs to the DnaA family. Oligomerizes as a right-handed, spiral filament on DNA at oriC.

It localises to the cytoplasm. In terms of biological role, plays an essential role in the initiation and regulation of chromosomal replication. ATP-DnaA binds to the origin of replication (oriC) to initiate formation of the DNA replication initiation complex once per cell cycle. Binds the DnaA box (a 9 base pair repeat at the origin) and separates the double-stranded (ds)DNA. Forms a right-handed helical filament on oriC DNA; dsDNA binds to the exterior of the filament while single-stranded (ss)DNA is stabiized in the filament's interior. The ATP-DnaA-oriC complex binds and stabilizes one strand of the AT-rich DNA unwinding element (DUE), permitting loading of DNA polymerase. After initiation quickly degrades to an ADP-DnaA complex that is not apt for DNA replication. Binds acidic phospholipids. The chain is Chromosomal replication initiator protein DnaA from Exiguobacterium sp. (strain ATCC BAA-1283 / AT1b).